Here is a 125-residue protein sequence, read N- to C-terminus: Small ribosomal subunit protein uS12 (125 aa).

3-methylthioaspartic acid is present on aspartate 89.

Belongs to the universal ribosomal protein uS12 family. As to quaternary structure, part of the 30S ribosomal subunit. Contacts proteins S8 and S17. May interact with IF1 in the 30S initiation complex.

Its function is as follows. With S4 and S5 plays an important role in translational accuracy. Interacts with and stabilizes bases of the 16S rRNA that are involved in tRNA selection in the A site and with the mRNA backbone. Located at the interface of the 30S and 50S subunits, it traverses the body of the 30S subunit contacting proteins on the other side and probably holding the rRNA structure together. The combined cluster of proteins S8, S12 and S17 appears to hold together the shoulder and platform of the 30S subunit. In Cupriavidus pinatubonensis (strain JMP 134 / LMG 1197) (Cupriavidus necator (strain JMP 134)), this protein is Small ribosomal subunit protein uS12.